Here is a 481-residue protein sequence, read N- to C-terminus: Tryptophan biosynthesis protein TrpCF (481 aa).

An indole-3-glycerol phosphate synthase region spans residues 1–283 (MKMTDFNTQQ…LAVRKVTLGE (283 aa)). An N-(5'-phosphoribosyl)anthranilate isomerase region spans residues 284-481 (NKVCGLTHPD…QAAFHAIRNY (198 aa)).

It in the N-terminal section; belongs to the TrpC family. In the C-terminal section; belongs to the TrpF family. In terms of assembly, monomer.

It catalyses the reaction N-(5-phospho-beta-D-ribosyl)anthranilate = 1-(2-carboxyphenylamino)-1-deoxy-D-ribulose 5-phosphate. The catalysed reaction is 1-(2-carboxyphenylamino)-1-deoxy-D-ribulose 5-phosphate + H(+) = (1S,2R)-1-C-(indol-3-yl)glycerol 3-phosphate + CO2 + H2O. It participates in amino-acid biosynthesis; L-tryptophan biosynthesis; L-tryptophan from chorismate: step 3/5. The protein operates within amino-acid biosynthesis; L-tryptophan biosynthesis; L-tryptophan from chorismate: step 4/5. In terms of biological role, bifunctional enzyme that catalyzes two sequential steps of tryptophan biosynthetic pathway. The first reaction is catalyzed by the isomerase, coded by the TrpF domain; the second reaction is catalyzed by the synthase, coded by the TrpC domain. The sequence is that of Tryptophan biosynthesis protein TrpCF (trpC) from Vibrio parahaemolyticus serotype O3:K6 (strain RIMD 2210633).